A 243-amino-acid polypeptide reads, in one-letter code: Transmembrane protein 176A (243 aa).

The residue at position 42 (serine 42) is a Phosphoserine. 4 consecutive transmembrane segments (helical) span residues 65–85 (WVVQIVLGILSVVLGGILYIC), 92–112 (TQGAPFWTGIVAMLAGAVAFL), 122–142 (ALMRILLVLASFCTAVAAIVI), and 204–224 (LLGVWVLLLLASLIPVCVYLW).

This sequence belongs to the TMEM176 family. Interacts with MCOLN2.

Its subcellular location is the membrane. The protein is Transmembrane protein 176A (Tmem176a) of Rattus norvegicus (Rat).